The primary structure comprises 933 residues: Potassium voltage-gated channel subfamily KQT member 5 (933 aa).

The Cytoplasmic portion of the chain corresponds to 1–126 (MPRHHAGGEE…YNVLERPRGW (126 aa)). Position 89 is a phosphoserine (S89). Residues 127–147 (AFVYHAFVFLLVFGCLILSVF) form a helical membrane-spanning segment. The Extracellular segment spans residues 148–157 (STIPEHTKLA). A helical membrane pass occupies residues 158–178 (SSCLLILEFVMIVVFGLEFII). Over 179–201 (RIWSAGCCCRYRGWQGRLRFARK) the chain is Cytoplasmic. The chain crosses the membrane as a helical span at residues 202 to 222 (PFCVIDTIVLIASIAVVSAKT). Residues 223-230 (QGNIFATS) lie on the Extracellular side of the membrane. The chain crosses the membrane as a helical; Voltage-sensor span at residues 231–253 (ALRSLRFLQILRMVRMDRRGGTW). A 1,2-diacyl-sn-glycero-3-phospho-(1D-myo-inositol-4,5-bisphosphate) contacts are provided by R249 and K265. Topologically, residues 254–267 (KLLGSVVYAHSKEL) are cytoplasmic. A helical transmembrane segment spans residues 268 to 288 (ITAWYIGFLVLIFSSFLVYLV). Residues 289 to 299 (EKDANKEFSTY) lie on the Extracellular side of the membrane. Residues 300-320 (ADALWWGTITLTTIGYGDKTP) constitute an intramembrane region (pore-forming). Residues 321-326 (LTWLGR) lie on the Extracellular side of the membrane. Residues 327-347 (LLSAGFALLGISFFALPAGIL) form a helical membrane-spanning segment. Topologically, residues 348 to 933 (GSGFALKVQE…ALSLPHVKLN (586 aa)) are cytoplasmic. K362 serves as a coordination point for a 1,2-diacyl-sn-glycero-3-phospho-(1D-myo-inositol-4,5-bisphosphate). The segment at 371–379 (AANLIQCVW) is interaction with CALM. Positions 405 to 465 (SPTKKEQGEA…EGSPTKVQKS (61 aa)) are disordered. Residues 432-441 (RGQSIKSRQA) are compositionally biased toward polar residues. S448 is modified (phosphoserine). The interaction with CALM stretch occupies residues 522 to 529 (VIRAIRIM). The interval 578-598 (KGQMTSDKKSREKITAEHETT) is disordered. A compositionally biased stretch (basic and acidic residues) spans 583-598 (SDKKSREKITAEHETT). A Phosphoserine modification is found at S832. Positions 878–933 (GAEETETDTFDGTPPPAGEAAFSSDSLRTGRSRSSQNICKTGDSTDALSLPHVKLN) are disordered. A compositionally biased stretch (polar residues) spans 900–924 (SSDSLRTGRSRSSQNICKTGDSTDA).

It belongs to the potassium channel family. KQT (TC 1.A.1.15) subfamily. Kv7.5/KCNQ5 sub-subfamily. As to quaternary structure, homotetramer; forms a functional homotetrameric channel resulting in the expression of a small M-current. Heterotetramer with KCNQ3; forms heterotetrameric M-channel responsible for the native M-current. Heterotetramer with KCNQ1; forms a functional voltage-gated potassium channel. Interacts (via C-terminus) with calmodulin/CALM; forms a heterooctameric structure (with 4:4 KCNQ1:CALM stoichiometry); the interaction is calcium-independent, constitutive and participates in the channel function. Strongly expressed in brain. Also expressed in colon, lung and uterus.

Its subcellular location is the cell membrane. It carries out the reaction K(+)(in) = K(+)(out). Its activity is regulated as follows. Phosphatidylinositol-4,5-bisphosphate (PIP2) is essential to activate KCNQ5 channel by inducing the coupling of the voltage-sensing domain (VSD) and the pore-forming domain (PD). Calcium suppresses KCNQ5 channel current through calcium-bound CALM C-terminus. Therefore CALM acts as calcium sensor that controls channel activity. Zinc potentiates channel activity in a pH-dependent manner. The activity is modulated by small changes in cell volume. Activated by the anticonvulsant retigabine. Inhibited by linopirdine and XE991. Functionally, pore-forming subunit of the voltage-gated potassium (Kv) channel broadly expressed in brain and skeletal muscle and involved in the regulation of neuronal excitability. Associates with KCNQ3/Kv7.3 pore-forming subunit to form a potassium channel which contributes to M-type current, a slowly activating and deactivating potassium conductance which plays a critical role in determining the subthreshold electrical excitability of neurons. Contributes, with other potassium channels, to the molecular diversity of a heterogeneous population of M-channels, varying in kinetic and pharmacological properties, which underlie this physiologically important current. Also forms a functional channel with KCNQ1/Kv7.1 subunit that may contribute to vasoconstriction and hypertension. Channel may be selectively permeable in vitro to other cations besides potassium, in decreasing order of affinity K(+) = Rb(+) &gt; Cs(+) &gt; Na(+). This is Potassium voltage-gated channel subfamily KQT member 5 from Mus musculus (Mouse).